The following is a 237-amino-acid chain: Ribosomal RNA small subunit methyltransferase G (237 aa).

S-adenosyl-L-methionine is bound by residues Gly-78, Phe-83, 129–130, and Arg-148; that span reads AE.

It belongs to the methyltransferase superfamily. RNA methyltransferase RsmG family.

The protein localises to the cytoplasm. Specifically methylates the N7 position of a guanine in 16S rRNA. This is Ribosomal RNA small subunit methyltransferase G from Streptococcus pyogenes serotype M2 (strain MGAS10270).